A 338-amino-acid polypeptide reads, in one-letter code: S-adenosylmethionine:tRNA ribosyltransferase-isomerase (338 aa).

The protein belongs to the QueA family. In terms of assembly, monomer.

Its subcellular location is the cytoplasm. The catalysed reaction is 7-aminomethyl-7-carbaguanosine(34) in tRNA + S-adenosyl-L-methionine = epoxyqueuosine(34) in tRNA + adenine + L-methionine + 2 H(+). It participates in tRNA modification; tRNA-queuosine biosynthesis. Functionally, transfers and isomerizes the ribose moiety from AdoMet to the 7-aminomethyl group of 7-deazaguanine (preQ1-tRNA) to give epoxyqueuosine (oQ-tRNA). The chain is S-adenosylmethionine:tRNA ribosyltransferase-isomerase from Francisella tularensis subsp. holarctica (strain FTNF002-00 / FTA).